Here is a 130-residue protein sequence, read N- to C-terminus: Small ribosomal subunit protein uS9 (130 aa).

This sequence belongs to the universal ribosomal protein uS9 family.

This chain is Small ribosomal subunit protein uS9, found in Clostridioides difficile (strain 630) (Peptoclostridium difficile).